The primary structure comprises 354 residues: Major egg antigen (354 aa).

A disordered region spans residues 1–21 (MSGGKQHNAVSIPVNREQRSF). SHSP domains are found at residues 122–233 (SVND…VAVR) and 251–354 (AKGV…AITH).

Belongs to the small heat shock protein (HSP20) family.

This chain is Major egg antigen, found in Schistosoma mansoni (Blood fluke).